Consider the following 272-residue polypeptide: Zinc transporter ZupT (272 aa).

The next 8 membrane-spanning stretches (helical) occupy residues 11–31 (IALAVTLAAGLATGLGSLMVV), 40–60 (LLAFGLAFAGGAMVYVSLTEI), 76–96 (LGFTFGTLTFLGGMLLIMVID), 126–146 (LMTAVAITAHNFPEGLATFFA), 158–178 (AFAIAIHNIPEGIAIAVPVYF), 189–209 (ASLLSGLAEPVGAGIGYLALF), 211–231 (VLSDAVFGTVFGLISGVMVFL), and 250–270 (VYGLVSGMGTLAISLVLFRFA). The Fe(2+) site is built by N136 and E139. Residues E139 and H164 each contribute to the Zn(2+) site. Fe(2+)-binding residues include N165, E168, and E197. Residue E168 participates in Zn(2+) binding.

This sequence belongs to the ZIP transporter (TC 2.A.5) family. ZupT subfamily.

Its subcellular location is the cell inner membrane. It carries out the reaction Zn(2+)(in) = Zn(2+)(out). Functionally, mediates zinc uptake. May also transport other divalent cations. The protein is Zinc transporter ZupT of Xanthomonas axonopodis pv. citri (strain 306).